The chain runs to 612 residues: Glutamine--fructose-6-phosphate aminotransferase [isomerizing] (612 aa).

Catalysis depends on C2, which acts as the Nucleophile; for GATase activity. Positions 2–219 (CGIVGANSTR…EGDIAIISKD (218 aa)) constitute a Glutamine amidotransferase type-2 domain. 2 SIS domains span residues 287–427 (AKEL…LKNS) and 460–602 (ISEY…VDQP). Residue K607 is the For Fru-6P isomerization activity of the active site.

Homodimer.

The protein resides in the cytoplasm. It catalyses the reaction D-fructose 6-phosphate + L-glutamine = D-glucosamine 6-phosphate + L-glutamate. In terms of biological role, catalyzes the first step in hexosamine metabolism, converting fructose-6P into glucosamine-6P using glutamine as a nitrogen source. The protein is Glutamine--fructose-6-phosphate aminotransferase [isomerizing] of Francisella tularensis subsp. tularensis (strain SCHU S4 / Schu 4).